Reading from the N-terminus, the 222-residue chain is Millepora cytotoxin-1 (222 aa).

An N-terminal signal peptide occupies residues 1-20 (MVTLYLHVPILLLVVITARA). Residues 21-75 (APKPDTHNPFDELSSVAEKQDLHYGDRSRKDPFIAQNDVGNNFRDGTQENLTKVR) constitute a propeptide that is removed on maturation. Disulfide bonds link Cys-89–Cys-115, Cys-142–Cys-168, and Cys-179–Cys-222. 3 repeats span residues 100–109 (SIHDNHYEDR), 153–162 (SIHDNYYEDR), and 206–215 (SQHNNYYEDR).

Belongs to the dermatopontin family. Post-translationally, is not glycosylated.

It is found in the secreted. The protein localises to the nematocyst. Its function is as follows. Is potently cytotoxic (EC(50) value 79 ng/mL) towards L1210 mouse leukemia cells, has hemagglutination activity on sheep erythrocytes, and is lethal in crayfish. Has no phospholipase A2 activity. This chain is Millepora cytotoxin-1, found in Millepora dichotoma (Net fire coral).